The sequence spans 209 residues: MQNIRLISHPLIEHKLTILRDKNTDPFQFRMLIDEITYLMLFEASRDFELKDTEVITPVATTKSKKLAQKIMICPILRAALGMLGSVFKLLPDASVGFLGFQRDEKTLKAEFYYAKLPKDHAERIAIVIDPMFATGGTAIDAVRFLKEKGVKKIKFISILAAPEGLNRFSEVYPDVEVYTAAIDRGLNEKGYIIPGLGDAGDRVFNTVY.

5-phospho-alpha-D-ribose 1-diphosphate is bound by residues arginine 78, arginine 103, and 130–138 (DPMFATGGT). Uracil is bound by residues isoleucine 193 and 198 to 200 (GDA). Aspartate 199 contributes to the 5-phospho-alpha-D-ribose 1-diphosphate binding site.

It belongs to the UPRTase family. Mg(2+) is required as a cofactor.

It carries out the reaction UMP + diphosphate = 5-phospho-alpha-D-ribose 1-diphosphate + uracil. It functions in the pathway pyrimidine metabolism; UMP biosynthesis via salvage pathway; UMP from uracil: step 1/1. Allosterically activated by GTP. Functionally, catalyzes the conversion of uracil and 5-phospho-alpha-D-ribose 1-diphosphate (PRPP) to UMP and diphosphate. The chain is Uracil phosphoribosyltransferase from Campylobacter fetus subsp. fetus (strain 82-40).